A 180-amino-acid chain; its full sequence is Major urinary protein 6 (180 aa).

The N-terminal stretch at 1–18 (MKMLLLLCLGLTLVCVHA) is a signal peptide. Cys-82 and Cys-175 are disulfide-bonded.

Belongs to the calycin superfamily. Lipocalin family. In terms of tissue distribution, abundant in the urine of adult male mice but absent from that of females.

The protein localises to the secreted. In terms of biological role, binds pheromones that are released from drying urine of males. These pheromones affect the sexual behavior of females. The chain is Major urinary protein 6 (Mup6) from Mus musculus (Mouse).